The sequence spans 181 residues: Oligoribonuclease (181 aa).

An Exonuclease domain is found at 8–171; sequence LIWIDLEMTG…DDIRESVAEL (164 aa). Tyrosine 129 is a catalytic residue.

The protein belongs to the oligoribonuclease family. Homodimer.

It localises to the cytoplasm. Its function is as follows. 3'-to-5' exoribonuclease specific for small oligoribonucleotides. The protein is Oligoribonuclease of Escherichia coli O139:H28 (strain E24377A / ETEC).